The following is a 102-amino-acid chain: Small ribosomal subunit protein eS24 (102 aa).

Positions 70 to 102 are disordered; it reads VYDSPAQAAEVEHDHMLERNKIGADDADAEEAE. Positions 79–93 are enriched in basic and acidic residues; that stretch reads EVEHDHMLERNKIGA.

Belongs to the eukaryotic ribosomal protein eS24 family.

The chain is Small ribosomal subunit protein eS24 from Halobacterium salinarum (strain ATCC 29341 / DSM 671 / R1).